Consider the following 875-residue polypeptide: Neurotrypsin (875 aa).

Residues 1–20 (MTLARFVLALVLGALPEVVG) form the signal peptide. An N-linked (GlcNAc...) asparagine glycan is attached at Asn-26. Residues 30-87 (HHRHRHSPPPGPQYPYYLPTHQRPPRTRPPPPLPRFPRPPRALPAQRPHALQAGHTPR) form a disordered region. Residues 56–71 (TRPPPPLPRFPRPPRA) show a composition bias toward pro residues. Residues 93-165 (CPAGELWVSV…GKVDWGYCDC (73 aa)) form the Kringle domain. 20 disulfides stabilise this stretch: Cys-93–Cys-165, Cys-109–Cys-149, Cys-138–Cys-163, Cys-195–Cys-259, Cys-208–Cys-269, Cys-239–Cys-249, Cys-305–Cys-369, Cys-318–Cys-379, Cys-349–Cys-359, Cys-412–Cys-475, Cys-425–Cys-485, Cys-455–Cys-465, Cys-525–Cys-589, Cys-538–Cys-599, Cys-569–Cys-579, Cys-619–Cys-750, Cys-661–Cys-677, Cys-765–Cys-831, Cys-794–Cys-808, and Cys-821–Cys-850. 4 consecutive SRCR domains span residues 170–271 (VRLR…TCSF), 280–381 (IRLV…SCTP), 387–487 (IRLA…ACYP), and 500–601 (VRLM…ICDY). The interval 619-630 (CGLRLLHRRQKR) is zymogen activation region. Residues 631–874 (IIGGKNSLRG…FVPWIKSVTK (244 aa)) form the Peptidase S1 domain. His-676 functions as the Charge relay system in the catalytic mechanism. A glycan (N-linked (GlcNAc...) asparagine) is linked at Asn-683. The active-site Charge relay system is the Asp-726. The active-site Charge relay system is the Ser-825.

The protein belongs to the peptidase S1 family.

Its subcellular location is the secreted. In terms of biological role, plays a role in neuronal plasticity and the proteolytic action may subserve structural reorganizations associated with learning and memory operations. This chain is Neurotrypsin (PRSS12), found in Macaca mulatta (Rhesus macaque).